The primary structure comprises 597 residues: Putative Xaa-Pro dipeptidyl-peptidase (597 aa).

Active-site charge relay system residues include Ser224, Asp336, and His367.

It belongs to the peptidase S15 family.

It carries out the reaction Hydrolyzes Xaa-Pro-|- bonds to release unblocked, N-terminal dipeptides from substrates including Ala-Pro-|-p-nitroanilide and (sequentially) Tyr-Pro-|-Phe-Pro-|-Gly-Pro-|-Ile.. The protein is Putative Xaa-Pro dipeptidyl-peptidase of Bacillus anthracis.